Reading from the N-terminus, the 389-residue chain is Terminal nucleotidyltransferase 5D (389 aa).

The protein belongs to the TENT family. As to expression, restricted to testis.

The enzyme catalyses RNA(n) + ATP = RNA(n)-3'-adenine ribonucleotide + diphosphate. Functionally, catalyzes the transfer of one adenosine molecule from an ATP to an mRNA poly(A) tail bearing a 3'-OH terminal group. In Homo sapiens (Human), this protein is Terminal nucleotidyltransferase 5D.